We begin with the raw amino-acid sequence, 328 residues long: dTDP-4-dehydrorhamnose 3,5-epimerase (328 aa).

Residues Arg23, Glu28, 46–48 (QEN), and Arg58 contribute to the substrate site. His61 acts as the Proton acceptor in catalysis. Positions 70 and 117 each coordinate substrate. The active-site Proton donor is the Tyr130. 2 residues coordinate substrate: Glu141 and Lys166.

This sequence belongs to the dTDP-4-dehydrorhamnose 3,5-epimerase family. Homodimer.

The enzyme catalyses dTDP-4-dehydro-6-deoxy-alpha-D-glucose = dTDP-4-dehydro-beta-L-rhamnose. It functions in the pathway carbohydrate biosynthesis; dTDP-L-rhamnose biosynthesis. It participates in bacterial outer membrane biogenesis; LPS O-antigen biosynthesis. Its function is as follows. Catalyzes the epimerization of the C3' and C5'positions of dTDP-6-deoxy-D-xylo-4-hexulose, forming dTDP-6-deoxy-L-lyxo-4-hexulose. In Neisseria gonorrhoeae, this protein is dTDP-4-dehydrorhamnose 3,5-epimerase (rfbC).